The sequence spans 111 residues: Putative single-stranded DNA-binding protein ycf41 (111 aa).

Residues Met1 to Lys98 form the SSB domain.

Its subcellular location is the plastid. The protein localises to the chloroplast. In Porphyra purpurea (Red seaweed), this protein is Putative single-stranded DNA-binding protein ycf41 (ycf41).